Reading from the N-terminus, the 709-residue chain is NAD(P)H-quinone oxidoreductase subunit 5, chloroplastic (709 aa).

14 helical membrane passes run tryptophan 9–phenylalanine 29, tryptophan 40–isoleucine 60, isoleucine 89–isoleucine 109, phenylalanine 125–isoleucine 145, isoleucine 147–threonine 167, asparagine 219–alanine 239, proline 257–valine 277, leucine 280–isoleucine 300, leucine 327–isoleucine 347, alanine 354–serine 374, isoleucine 396–serine 416, tryptophan 425–tyrosine 445, leucine 540–phenylalanine 560, and phenylalanine 594–leucine 614.

Belongs to the complex I subunit 5 family. NDH is composed of at least 16 different subunits, 5 of which are encoded in the nucleus.

The protein resides in the plastid. It is found in the chloroplast thylakoid membrane. The enzyme catalyses a plastoquinone + NADH + (n+1) H(+)(in) = a plastoquinol + NAD(+) + n H(+)(out). It catalyses the reaction a plastoquinone + NADPH + (n+1) H(+)(in) = a plastoquinol + NADP(+) + n H(+)(out). NDH shuttles electrons from NAD(P)H:plastoquinone, via FMN and iron-sulfur (Fe-S) centers, to quinones in the photosynthetic chain and possibly in a chloroplast respiratory chain. The immediate electron acceptor for the enzyme in this species is believed to be plastoquinone. Couples the redox reaction to proton translocation, and thus conserves the redox energy in a proton gradient. The polypeptide is NAD(P)H-quinone oxidoreductase subunit 5, chloroplastic (ndhF) (Pachira aquatica (Guiana chestnut)).